Consider the following 251-residue polypeptide: Transmembrane ascorbate-dependent reductase CYB561 (251 aa).

Met1 carries the N-acetylmethionine modification. Residues 1–16 (MEGGAAASTPAALPYY) are Cytoplasmic-facing. The chain crosses the membrane as a helical span at residues 17 to 37 (VAFSQLLGLTLVAMTGAWLGL). Residues 19–220 (FSQLLGLTLV…FGGAVLYILT (202 aa)) form the Cytochrome b561 domain. Residues 38 to 51 (YRGGIAWESDLQFN) lie on the Vesicular side of the membrane. Residues 52 to 72 (AHPLCMVIGLIFLQGDALLVY) traverse the membrane as a helical segment. Heme b-binding residues include His53, Arg73, and Lys80. Residues 73 to 85 (RVFRNEAKRTTKV) are Cytoplasmic-facing. Residues Lys80 and Lys84 each contribute to the L-ascorbate site. Residues 86–106 (LHGLLHIFALVIALVGLVAVF) form a helical membrane-spanning segment. Heme b-binding positions include His87, 116–119 (DLYS), and His121. The Vesicular portion of the chain corresponds to 107 to 124 (DYHRKEGYADLYSLHSWC). Residues 125-145 (GILVFVLYFVQWLVGFSFFLF) traverse the membrane as a helical segment. The Cytoplasmic segment spans residues 146–158 (PGASFSLRSRYRP). Position 153 (Arg153) interacts with L-ascorbate. A helical membrane pass occupies residues 159–179 (QHIFFGATIFLLSVGTALLGL). Heme b is bound by residues His160 and Glu181. Topologically, residues 180-198 (KEALLFKLRDKYSAFEPEG) are vesicular. The helical transmembrane segment at 199–219 (VLANVLGLLLACFGGAVLYIL) threads the bilayer. Over 220-251 (TRADWKRPSQAEEQALSMDFKTLTEGDSPGSQ) the chain is Cytoplasmic. Lys225 provides a ligand contact to heme b. Residue Ser247 is modified to Phosphoserine.

The cofactor is heme b.

The protein resides in the cytoplasmic vesicle. It is found in the secretory vesicle. It localises to the chromaffin granule membrane. The catalysed reaction is monodehydro-L-ascorbate radical(out) + L-ascorbate(in) = monodehydro-L-ascorbate radical(in) + L-ascorbate(out). Transmembrane reductase that uses ascorbate as an electron donor in the cytoplasm and transfers electrons across membranes to reduce monodehydro-L-ascorbate radical in the lumen of secretory vesicles. It is therefore involved the regeneration and homeostasis within secretory vesicles of ascorbate which in turn provides reducing equivalents needed to support the activity of intravesicular enzymes. The chain is Transmembrane ascorbate-dependent reductase CYB561 (CYB561) from Pongo abelii (Sumatran orangutan).